The primary structure comprises 185 residues: Putative gustatory receptor clone PTE01 (185 aa).

Residues M1–A11 form a helical membrane-spanning segment. Topologically, residues D12–Q42 are extracellular. Residues M43–Y62 traverse the membrane as a helical segment. Over D63–G84 the chain is Cytoplasmic. The helical transmembrane segment at L85 to V105 threads the bilayer. The Extracellular segment spans residues L106–N138. A helical transmembrane segment spans residues I139–Y160. Residues Y161–T182 lie on the Cytoplasmic side of the membrane. Residues C183–S185 form a helical membrane-spanning segment.

Belongs to the G-protein coupled receptor 1 family. As to expression, tongue specific.

It localises to the cell membrane. Functionally, possible taste receptor. The sequence is that of Putative gustatory receptor clone PTE01 from Rattus norvegicus (Rat).